A 220-amino-acid polypeptide reads, in one-letter code: Probable acrEF/envCD operon repressor (220 aa).

In terms of domain architecture, HTH tetR-type spans 10-70; the sequence is LKTRQELIET…EMWLQQPSLR (61 aa). The H-T-H motif DNA-binding region spans 33–52; it reads TLNDIADAANVTRGAIYWHF.

Its function is as follows. Potential regulator protein for the acrEF/envCD genes. This is Probable acrEF/envCD operon repressor (envR) from Escherichia coli O157:H7.